The sequence spans 185 residues: MFRCGIDYTRCRWILPMLLLFAIIFDIIAIAAQSGWVEDQDAKTHYASMWKQCRGRNDQWDCKSLMEFSWAQAVAALMIIGLIILIFAFIISLVALCSTVNVSLLPFIGLLLILAVIVQIIALIIYPVKFNEQIYEGYYDYTWAYGFGWGATILTLGCAILFCCLPRYESEITGLEKTKYIYQSG.

Transmembrane regions (helical) follow at residues 13–33, 74–94, 105–125, and 143–163; these read WILP…IAAQ, VAAL…ISLV, LPFI…ALII, and WAYG…ILFC.

The protein belongs to the TMEM47 family.

The protein localises to the cell junction. Its subcellular location is the desmosome. It localises to the cell membrane. It is found in the cytoplasm. In terms of biological role, component of intercellular desmosome junctions. Positively regulates apoptosis in the early-stage embryo in response to UV irradiation, this is partially dependent on tp53 activation. Required for the survival of cell populations in the developing notochord and skin, therefore required for normal embryogenesis beyond 30 hpf. Acts as a positive regulator of endothelial cell apoptosis in response to blood flow-derived shear stress. This is p53 apoptosis effector related to PMP-22 from Danio rerio (Zebrafish).